The chain runs to 545 residues: Tripartite motif-containing protein 26 (545 aa).

An RING-type zinc finger spans residues 16–57 (CSICLDYLRDPVTIDCGHVFCRSCTSDIRPISGNRPVCPLCK). The B box-type zinc-finger motif lies at 97 to 138 (QDMKLCERHQEKLHYYCEDDGKLLCVMCRESREHRPHTAVLV). 4 residues coordinate Zn(2+): C102, H105, C124, and H130. Residues 197-243 (QFLKKREQHLLDQLATLEQLLTEGREKFKTRGVSELDRLTLVISELE) are a coiled coil. A B30.2/SPRY domain is found at 301–545 (RGLRQFQGKL…WPGARLLLRP (245 aa)). Residues 382 to 443 (REGWSEDEEE…EEEEEVQESC (62 aa)) form a disordered region. Positions 386–440 (SEDEEEGEEEEEGEEEEEDEEVGYGDGYEDWETDEEDESLGEEEEEEEEEEEEVQ) are enriched in acidic residues.

It belongs to the TRIM/RBCC family. In terms of assembly, interacts with TBK1; this interaction bridges together TBK1 and NEMO in order to activate TBK1. Interacts with INCA1. In terms of processing, autoubiquitinates upon viral infection. In turn, autoubiquitinated TRIM26 recruits NEMO and bridges TBK1-NEMO interaction.

The protein localises to the cytoplasm. It localises to the nucleus. It catalyses the reaction S-ubiquitinyl-[E2 ubiquitin-conjugating enzyme]-L-cysteine + [acceptor protein]-L-lysine = [E2 ubiquitin-conjugating enzyme]-L-cysteine + N(6)-ubiquitinyl-[acceptor protein]-L-lysine.. Its function is as follows. E3 ubiquitin-protein ligase which regulates the IFN-beta production and antiviral response downstream of various DNA-encoded pattern-recognition receptors (PRRs). Also plays a central role in determining the response to different forms of oxidative stress by controlling levels of DNA glycosylases NEIL1, NEIL3 and NTH1 that are involved in repair of damaged DNA. Promotes nuclear IRF3 ubiquitination and proteasomal degradation. Bridges together TBK1 and NEMO during the innate response to viral infection leading to the activation of TBK1. Positively regulates LPS-mediated inflammatory innate immune response by catalyzing the 'Lys-11'-linked polyubiquitination of TAB1 to enhance its activation and subsequent NF-kappa-B and MAPK signaling. In a manner independent of its catalytic activity, inhibits WWP2, a SOX2-directed E3 ubiquitin ligase, and thus protects SOX2 from polyubiquitination and proteasomal degradation. Ubiquitinates the histone acetyltransferase protein complex component PHF20 and thereby triggers its degradation in the nucleus after its recruitment by the histone demethylase KDM6B, serving as a scaffold protein. Upon induction by TGF-beta, ubiquitinates the TFIID component TAF7 for proteasomal degradation. Induces ferroptosis by ubiquitinating SLC7A11, a critical protein for lipid reactive oxygen species (ROS) scavenging. This Mus musculus (Mouse) protein is Tripartite motif-containing protein 26 (Trim26).